The sequence spans 399 residues: Tyrosine--tRNA ligase (399 aa).

The short motif at 42-51 is the 'HIGH' region element; sequence PTAPDIHLGH. The 'KMSKS' region signature appears at 226–230; it reads KMSKS. An ATP-binding site is contributed by Lys-229. The 62-residue stretch at 337-398 folds into the S4 RNA-binding domain; the sequence is LTIGYILQRA…GKRRFAKVKV (62 aa).

It belongs to the class-I aminoacyl-tRNA synthetase family. TyrS type 2 subfamily. As to quaternary structure, homodimer.

The protein resides in the cytoplasm. The catalysed reaction is tRNA(Tyr) + L-tyrosine + ATP = L-tyrosyl-tRNA(Tyr) + AMP + diphosphate + H(+). Catalyzes the attachment of tyrosine to tRNA(Tyr) in a two-step reaction: tyrosine is first activated by ATP to form Tyr-AMP and then transferred to the acceptor end of tRNA(Tyr). This is Tyrosine--tRNA ligase from Coxiella burnetii (strain RSA 493 / Nine Mile phase I).